Consider the following 155-residue polypeptide: Xanthine-guanine phosphoribosyltransferase (155 aa).

Residues 37 to 38 (RG), Arg69, and 90 to 98 (DDLVDTGGT) contribute to the 5-phospho-alpha-D-ribose 1-diphosphate site. Arg69 serves as a coordination point for GMP. Position 91 (Asp91) interacts with Mg(2+). Guanine-binding residues include Asp94 and Ile137. Residues Asp94 and Ile137 each coordinate xanthine. GMP-binding positions include 94 to 98 (DTGGT) and 136 to 137 (WI).

It belongs to the purine/pyrimidine phosphoribosyltransferase family. XGPT subfamily. In terms of assembly, homotetramer. Mg(2+) is required as a cofactor.

The protein localises to the cell inner membrane. The catalysed reaction is GMP + diphosphate = guanine + 5-phospho-alpha-D-ribose 1-diphosphate. The enzyme catalyses XMP + diphosphate = xanthine + 5-phospho-alpha-D-ribose 1-diphosphate. It carries out the reaction IMP + diphosphate = hypoxanthine + 5-phospho-alpha-D-ribose 1-diphosphate. It functions in the pathway purine metabolism; GMP biosynthesis via salvage pathway; GMP from guanine: step 1/1. Its pathway is purine metabolism; XMP biosynthesis via salvage pathway; XMP from xanthine: step 1/1. Its function is as follows. Purine salvage pathway enzyme that catalyzes the transfer of the ribosyl-5-phosphate group from 5-phospho-alpha-D-ribose 1-diphosphate (PRPP) to the N9 position of the 6-oxopurines guanine and xanthine to form the corresponding ribonucleotides GMP (guanosine 5'-monophosphate) and XMP (xanthosine 5'-monophosphate), with the release of PPi. To a lesser extent, also acts on hypoxanthine. The protein is Xanthine-guanine phosphoribosyltransferase of Aeromonas salmonicida (strain A449).